The primary structure comprises 237 residues: Orotate phosphoribosyltransferase (237 aa).

5-phospho-alpha-D-ribose 1-diphosphate is bound at residue K29. 37 to 38 (FF) contacts orotate. 5-phospho-alpha-D-ribose 1-diphosphate is bound by residues 79 to 80 (YK), R105, K106, K109, H111, and 130 to 138 (DDVMSAGTA). Orotate-binding residues include S134 and R162.

The protein belongs to the purine/pyrimidine phosphoribosyltransferase family. PyrE subfamily. Homodimer. Mg(2+) is required as a cofactor.

It catalyses the reaction orotidine 5'-phosphate + diphosphate = orotate + 5-phospho-alpha-D-ribose 1-diphosphate. It participates in pyrimidine metabolism; UMP biosynthesis via de novo pathway; UMP from orotate: step 1/2. Its function is as follows. Catalyzes the transfer of a ribosyl phosphate group from 5-phosphoribose 1-diphosphate to orotate, leading to the formation of orotidine monophosphate (OMP). This Polaromonas naphthalenivorans (strain CJ2) protein is Orotate phosphoribosyltransferase.